The sequence spans 445 residues: Tubulin beta-2B chain (445 aa).

The MREI motif signature appears at 1-4 (MREI). GTP is bound at residue glutamine 11. A Phosphoserine modification is found at serine 40. At threonine 55 the chain carries Phosphothreonine. Residue lysine 58 is modified to N6-acetyllysine; alternate. Lysine 58 carries the N6-succinyllysine; alternate modification. Lysine 58 is covalently cross-linked (Glycyl lysine isopeptide (Lys-Gly) (interchain with G-Cter in ubiquitin); alternate). Residues glutamate 69, serine 138, glycine 142, threonine 143, and glycine 144 each coordinate GTP. Glutamate 69 contacts Mg(2+). Serine 172 bears the Phosphoserine; by CDK1 mark. GTP is bound by residues asparagine 204 and asparagine 226. 2 positions are modified to phosphothreonine: threonine 285 and threonine 290. The residue at position 318 (arginine 318) is an Omega-N-methylarginine. Residue lysine 324 forms a Glycyl lysine isopeptide (Lys-Gly) (interchain with G-Cter in ubiquitin) linkage. Residues 422–445 (YQQYQDATADEQGEFEEEEGEDEA) are disordered. Over residues 429–445 (TADEQGEFEEEEGEDEA) the composition is skewed to acidic residues. Residue glutamate 438 is modified to 5-glutamyl polyglutamate.

It belongs to the tubulin family. As to quaternary structure, dimer of alpha and beta chains. A typical microtubule is a hollow water-filled tube with an outer diameter of 25 nm and an inner diameter of 15 nM. Alpha-beta heterodimers associate head-to-tail to form protofilaments running lengthwise along the microtubule wall with the beta-tubulin subunit facing the microtubule plus end conferring a structural polarity. Microtubules usually have 13 protofilaments but different protofilament numbers can be found in some organisms and specialized cells. It depends on Mg(2+) as a cofactor. Some glutamate residues at the C-terminus are polyglycylated, resulting in polyglycine chains on the gamma-carboxyl group. Glycylation is mainly limited to tubulin incorporated into axonemes (cilia and flagella) whereas glutamylation is prevalent in neuronal cells, centrioles, axonemes, and the mitotic spindle. Both modifications can coexist on the same protein on adjacent residues, and lowering polyglycylation levels increases polyglutamylation, and reciprocally. The precise function of polyglycylation is still unclear. In terms of processing, some glutamate residues at the C-terminus are polyglutamylated, resulting in polyglutamate chains on the gamma-carboxyl group. Polyglutamylation plays a key role in microtubule severing by spastin (SPAST). SPAST preferentially recognizes and acts on microtubules decorated with short polyglutamate tails: severing activity by SPAST increases as the number of glutamates per tubulin rises from one to eight, but decreases beyond this glutamylation threshold. Post-translationally, phosphorylated on Ser-172 by CDK1 during the cell cycle, from metaphase to telophase, but not in interphase. This phosphorylation inhibits tubulin incorporation into microtubules.

It is found in the cytoplasm. It localises to the cytoskeleton. In terms of biological role, tubulin is the major constituent of microtubules, a cylinder consisting of laterally associated linear protofilaments composed of alpha- and beta-tubulin heterodimers. Microtubules grow by the addition of GTP-tubulin dimers to the microtubule end, where a stabilizing cap forms. Below the cap, tubulin dimers are in GDP-bound state, owing to GTPase activity of alpha-tubulin. Implicated in neuronal migration. The protein is Tubulin beta-2B chain (TUBB2B) of Bos taurus (Bovine).